Reading from the N-terminus, the 351-residue chain is Anthranilate phosphoribosyltransferase (351 aa).

5-phospho-alpha-D-ribose 1-diphosphate is bound by residues glycine 89, 92 to 93, threonine 97, 99 to 102, 117 to 125, and serine 129; these read GD, NIST, and KHGNRSASG. Glycine 89 provides a ligand contact to anthranilate. Serine 101 contacts Mg(2+). Residue asparagine 120 participates in anthranilate binding. Arginine 175 contributes to the anthranilate binding site. Mg(2+)-binding residues include aspartate 234 and glutamate 235.

It belongs to the anthranilate phosphoribosyltransferase family. Homodimer. Requires Mg(2+) as cofactor.

It catalyses the reaction N-(5-phospho-beta-D-ribosyl)anthranilate + diphosphate = 5-phospho-alpha-D-ribose 1-diphosphate + anthranilate. The protein operates within amino-acid biosynthesis; L-tryptophan biosynthesis; L-tryptophan from chorismate: step 2/5. Its function is as follows. Catalyzes the transfer of the phosphoribosyl group of 5-phosphorylribose-1-pyrophosphate (PRPP) to anthranilate to yield N-(5'-phosphoribosyl)-anthranilate (PRA). The protein is Anthranilate phosphoribosyltransferase of Synechococcus sp. (strain CC9902).